Reading from the N-terminus, the 85-residue chain is Large ribosomal subunit protein bL27 (85 aa).

Residues methionine 1–leucine 21 form a disordered region.

Belongs to the bacterial ribosomal protein bL27 family.

The sequence is that of Large ribosomal subunit protein bL27 from Wolinella succinogenes (strain ATCC 29543 / DSM 1740 / CCUG 13145 / JCM 31913 / LMG 7466 / NCTC 11488 / FDC 602W) (Vibrio succinogenes).